The sequence spans 778 residues: Molybdenum cofactor sulfurase (778 aa).

At Lys235 the chain carries N6-(pyridoxal phosphate)lysine. Cys399 is a catalytic residue. 2 disordered regions span residues 576–596 (LSKN…SRVC) and 654–673 (ARPA…DTEK). A compositionally biased stretch (low complexity) spans 584 to 594 (RSSSSRSRSSR). One can recognise an MOSC domain in the interval 651-778 (LPTARPALPG…ETAERARSRL (128 aa)).

The protein belongs to the class-V pyridoxal-phosphate-dependent aminotransferase family. MOCOS subfamily. It depends on pyridoxal 5'-phosphate as a cofactor.

It catalyses the reaction Mo-molybdopterin + L-cysteine + AH2 = thio-Mo-molybdopterin + L-alanine + A + H2O. It functions in the pathway cofactor biosynthesis; molybdopterin biosynthesis. Functionally, sulfurates the molybdenum cofactor. Sulfation of molybdenum is essential for xanthine dehydrogenase (XDH) and aldehyde oxidase (ADO) enzymes in which molybdenum cofactor is liganded by 1 oxygen and 1 sulfur atom in active form. The protein is Molybdenum cofactor sulfurase of Chaetomium globosum (strain ATCC 6205 / CBS 148.51 / DSM 1962 / NBRC 6347 / NRRL 1970) (Soil fungus).